We begin with the raw amino-acid sequence, 795 residues long: Glycerol-3-phosphate acyltransferase 2, mitochondrial (795 aa).

The interval 1–21 (MATMLEGRCQTQPRSSPSGRE) is disordered. The Cytoplasmic segment spans residues 1-305 (MATMLEGRCQ…LGPRLSALGQ (305 aa)). The segment covering 9 to 18 (CQTQPRSSPS) has biased composition (polar residues). The acyltransferase stretch occupies residues 180-331 (QLHKGQMKMV…DALLVPVAVT (152 aa)). The short motif at 205-210 (HKTLLD) is the HXXXXD motif element. A helical membrane pass occupies residues 306–332 (AWVGFVVQAVQVGIVPDALLVPVAVTY). Residues 333–449 (DLVPDAPCDI…QLLVRRLSCH (117 aa)) are Mitochondrial intermembrane-facing. Residues 450-472 (VLSASVGSSAVMSTAIMATLLLF) form a helical membrane-spanning segment. Residues 473-795 (KHQKLLGEFS…EQFIRQFICS (323 aa)) are Cytoplasmic-facing. Serine 656 is modified (phosphoserine). Phosphothreonine is present on threonine 660. Residues serine 662 and serine 664 each carry the phosphoserine modification.

It belongs to the GPAT/DAPAT family. In terms of assembly, interacts with PIWIL2.

The protein localises to the mitochondrion outer membrane. It catalyses the reaction sn-glycerol 3-phosphate + an acyl-CoA = a 1-acyl-sn-glycero-3-phosphate + CoA. The enzyme catalyses a 1-acyl-sn-glycero-3-phosphate + an acyl-CoA = a 1,2-diacyl-sn-glycero-3-phosphate + CoA. The catalysed reaction is 1-(9Z-octadecenoyl)-sn-glycero-3-phosphate + (9Z)-octadecenoyl-CoA = 1,2-di-(9Z-octadecenoyl)-sn-glycero-3-phosphate + CoA. It carries out the reaction 1-(9Z-octadecenoyl)-sn-glycero-3-phosphate + (5Z,8Z,11Z,14Z)-eicosatetraenoyl-CoA = 1-(9Z)-octadecenoyl-2-(5Z,8Z,11Z,14Z)-eicosatetraenoyl-sn-glycero-3-phosphate + CoA. It catalyses the reaction (5Z,8Z,11Z,14Z)-eicosatetraenoyl-CoA + sn-glycerol 3-phosphate = 1-(5Z,8Z,11Z,14Z-eicosatetraenoyl)-sn-glycero-3-phosphate + CoA. Its pathway is phospholipid metabolism; CDP-diacylglycerol biosynthesis; CDP-diacylglycerol from sn-glycerol 3-phosphate: step 1/3. With respect to regulation, inhibited by N-ethylmaleimide (NEM). Transfers an acyl-group from acyl-ACP to the sn-1 position of glycerol-3-phosphate producing a lysophosphatidic acid (LPA), an essential step for the triacylglycerol (TAG) and glycerophospholipids. In vitro also transfers an acyl-group from acyl-ACP to the LPA producing a phosphatidic acid (PA). Prefers arachidonoyl-CoA as the acyl donor. Required for primary processing step during piRNA biosynthesis. Molecular mechanisms by which it promotes piRNA biosynthesis are unclear and do not involve its acyltransferase activity. This chain is Glycerol-3-phosphate acyltransferase 2, mitochondrial, found in Homo sapiens (Human).